Consider the following 108-residue polypeptide: Insertion element IS629 uncharacterized 12 kDa protein S4062 (108 aa).

This sequence belongs to the transposase 8 family.

This is Insertion element IS629 uncharacterized 12 kDa protein S4062 from Shigella flexneri.